Consider the following 88-residue polypeptide: MEIQLINIGFGNIVSANRVVAIVSPESAPIKRIITDARDRGQLIDATYGRRTRAVIITDSSHVILSAIQPETVANRFVISRDHQTVDN.

It belongs to the RemA family.

This is Putative regulatory protein Npun_R3866 from Nostoc punctiforme (strain ATCC 29133 / PCC 73102).